The following is a 129-amino-acid chain: Small ribosomal subunit protein uS11 (129 aa).

Belongs to the universal ribosomal protein uS11 family. As to quaternary structure, part of the 30S ribosomal subunit. Interacts with proteins S7 and S18. Binds to IF-3.

In terms of biological role, located on the platform of the 30S subunit, it bridges several disparate RNA helices of the 16S rRNA. Forms part of the Shine-Dalgarno cleft in the 70S ribosome. This Mesorhizobium japonicum (strain LMG 29417 / CECT 9101 / MAFF 303099) (Mesorhizobium loti (strain MAFF 303099)) protein is Small ribosomal subunit protein uS11.